A 295-amino-acid polypeptide reads, in one-letter code: Forkhead box protein N5 (295 aa).

Residues 119–146 (STVEDSEDEAPTSCSDLMTDDDNDDSYN) form a disordered region. The fork-head DNA-binding region spans 178-275 (RPPLNYCNLI…NEMHALSDDL (98 aa)).

As to expression, ubiquitously expressed in early cleavage stage and gastrula stage embryos.

It localises to the nucleus. The chain is Forkhead box protein N5 from Xenopus laevis (African clawed frog).